The sequence spans 1714 residues: Bifunctional glutamate/proline--tRNA ligase (1714 aa).

The disordered stretch occupies residues 166–191 (DAKVKRSPQSSKEQTPAKTGERKQEG). A glutamate--tRNA ligase region spans residues 170 to 754 (KRSPQSSKEQ…ASELDSQISQ (585 aa)). Polar residues predominate over residues 172–182 (SPQSSKEQTPA). The 'HIGH' region signature appears at 209-220 (PPEASGYLHIGH). Positions 438 to 442 (VLSKR) match the 'KMSKS' region motif. Disordered stretches follow at residues 718–754 (PTSG…QISQ), 791–817 (GKDW…ANDA), and 943–962 (GTTA…EKNP). 2 stretches are compositionally biased toward low complexity: residues 734–746 (KASS…GQAS) and 800–817 (SASS…ANDA). WHEP-TRS domains lie at 744-800 (QASE…GQTS), 816-872 (DAVS…GTVP), 890-946 (SVAQ…GTTA), 969-1025 (TVNT…GTVA), and 1044-1100 (DVGS…DAKS). The segment at 755 to 1201 (QGDLVRDLKS…KPAKPVKKEP (447 aa)) is 6 X 57 AA approximate repeats. Disordered regions lie at residues 1093–1119 (DWTP…SPAK) and 1168–1210 (FPVA…GAVK). Over residues 1094 to 1109 (WTPDAKSEPAVVKKEA) the composition is skewed to basic and acidic residues. S1110 is modified (phosphoserine). The WHEP-TRS 6 domain maps to 1118–1174 (AKDELTQEINAQGEKVRAAKGNKAAKEVIDAEVAKLLALKAKYKEVTGTDFPVAGRG). Gly residues predominate over residues 1172 to 1181 (GRGGGGGGGS). The segment at 1207–1714 (GAVKKQTRLG…KFYTLFGRSY (508 aa)) is proline--tRNA ligase. L-proline is bound by residues 1322–1324 (TSE) and R1353. ATP-binding residues include R1353, E1355, R1364, T1365, Q1438, and T1441. Residue Q1438 participates in Mg(2+) binding. H1443 lines the L-proline pocket. ATP-binding residues include T1476 and R1478. Residues C1648, C1653, and C1695 each coordinate Zn(2+).

In the N-terminal section; belongs to the class-I aminoacyl-tRNA synthetase family. Glutamate--tRNA ligase type 2 subfamily. This sequence in the C-terminal section; belongs to the class-II aminoacyl-tRNA synthetase family. Component of the multisynthetase complex which is comprised of a bifunctional glutamyl-prolyl-tRNA synthetase, the monospecific isoleucyl, leucyl, glutaminyl, methionyl, lysyl, arginyl, and aspartyl-tRNA synthetases as well as three auxiliary proteins, p18, p48 and p43.

The catalysed reaction is tRNA(Glu) + L-glutamate + ATP = L-glutamyl-tRNA(Glu) + AMP + diphosphate. It carries out the reaction tRNA(Pro) + L-proline + ATP = L-prolyl-tRNA(Pro) + AMP + diphosphate. In terms of biological role, catalyzes the attachment of both L-glutamate and L-proline to their cognate tRNAs in a two-step reaction where the amino acid is first activated by ATP to form a covalent intermediate with AMP. Subsequently, the activated amino acid is transferred to the acceptor end of the cognate tRNA to form L-glutamyl-tRNA(Glu) and L-prolyl-tRNA(Pro). This chain is Bifunctional glutamate/proline--tRNA ligase, found in Drosophila melanogaster (Fruit fly).